The following is a 179-amino-acid chain: Bifunctional protein PyrR (179 aa).

The short motif at 100 to 112 (VILVDDVLFTGRT) is the PRPP-binding element.

Belongs to the purine/pyrimidine phosphoribosyltransferase family. PyrR subfamily.

The enzyme catalyses UMP + diphosphate = 5-phospho-alpha-D-ribose 1-diphosphate + uracil. Its function is as follows. Regulates the transcription of the pyrimidine nucleotide (pyr) operon in response to exogenous pyrimidines. Functionally, also displays a weak uracil phosphoribosyltransferase activity which is not physiologically significant. In Haemophilus influenzae (strain 86-028NP), this protein is Bifunctional protein PyrR.